Here is a 1499-residue protein sequence, read N- to C-terminus: Ring canal kelch homolog (1499 aa).

Positions 56–66 (LDESSQKQLPR) are enriched in polar residues. The disordered stretch occupies residues 56 to 75 (LDESSQKQLPRSNGKEKTTG). Residues 100–166 (CDVVLVAEGI…VYRAVVEVTE (67 aa)) form the BTB domain. Kelch repeat units lie at residues 351–396 (VLLV…VLGD), 397–443 (KVYA…VLNN), 444–490 (CIYA…VVNG), 492–539 (LYAV…VLDN), 541–586 (LYAV…AHNG), and 588–634 (LYVV…MIDK). A non-standard amino acid (selenocysteine) is located at residue U637. Disordered stretches follow at residues 679 to 714 (AGQAAGFGNDDENSQAEGLNPEPANSNNSAPNGNNV), 750 to 786 (LQYAVLNQPQPGPSGLGPGQAHRSLGGERGAVGGGGG), 825 to 856 (AGYDVPRGRPAPSYYQNQPPTGPSANGRCPNL), 984 to 1017 (NQSNSSSASSASPYGANGPATTSQPNPTKDSSSV), 1033 to 1085 (SMNN…GNGG), 1107 to 1160 (ASTS…PVDV), 1301 to 1321 (QVGRARSESPSRPPGSDPLRT), and 1334 to 1499 (ARSP…TASE). The span at 698–713 (NPEPANSNNSAPNGNN) shows a compositional bias: low complexity. Over residues 776–786 (GERGAVGGGGG) the composition is skewed to gly residues. Positions 986 to 1003 (SNSSSASSASPYGANGPA) are enriched in low complexity. A compositionally biased stretch (polar residues) spans 1004-1017 (TTSQPNPTKDSSSV). The span at 1040-1054 (SSAAHGTASGSAPAA) shows a compositional bias: low complexity. Over residues 1065-1085 (ISGGASGGGAGGAGSSGGNGG) the composition is skewed to gly residues. The segment covering 1107-1119 (ASTSTTLGGKSTG) has biased composition (low complexity). The span at 1135 to 1147 (GPSDPTAGTSAPQ) shows a compositional bias: polar residues. Positions 1348-1359 (NREKPREVRRIT) are enriched in basic and acidic residues. Low complexity predominate over residues 1401–1410 (SSASSSSDSD). The span at 1460–1471 (VGSSSNETSDSL) shows a compositional bias: polar residues.

Its subcellular location is the cytoplasm. It localises to the cytoskeleton. Functionally, may play a role in organizing the actin cytoskeleton. This is Ring canal kelch homolog from Anopheles stephensi (Indo-Pakistan malaria mosquito).